Here is a 217-residue protein sequence, read N- to C-terminus: Probable ribonuclease P protein subunit 1 (217 aa).

Belongs to the eukaryotic/archaeal RNase P protein component 1 family.

It is found in the nucleus. The protein resides in the nucleolus. It catalyses the reaction Endonucleolytic cleavage of RNA, removing 5'-extranucleotides from tRNA precursor.. Its function is as follows. Part of ribonuclease P, a protein complex that generates mature tRNA molecules by cleaving their 5'-ends. This chain is Probable ribonuclease P protein subunit 1, found in Schizosaccharomyces pombe (strain 972 / ATCC 24843) (Fission yeast).